A 447-amino-acid chain; its full sequence is Signal recognition particle 54 kDa protein (447 aa).

GTP-binding positions include 103-110 (GVQGSGKT), 185-189 (DTAGR), and 245-248 (TKMD).

The protein belongs to the GTP-binding SRP family. SRP54 subfamily. In terms of assembly, part of the signal recognition particle protein translocation system, which is composed of SRP and FtsY. Archaeal SRP consists of a 7S RNA molecule of 300 nucleotides and two protein subunits: SRP54 and SRP19.

It is found in the cytoplasm. It catalyses the reaction GTP + H2O = GDP + phosphate + H(+). In terms of biological role, involved in targeting and insertion of nascent membrane proteins into the cytoplasmic membrane. Binds to the hydrophobic signal sequence of the ribosome-nascent chain (RNC) as it emerges from the ribosomes. The SRP-RNC complex is then targeted to the cytoplasmic membrane where it interacts with the SRP receptor FtsY. The polypeptide is Signal recognition particle 54 kDa protein (Saccharolobus islandicus (strain M.16.27) (Sulfolobus islandicus)).